Reading from the N-terminus, the 173-residue chain is Transcriptional regulator ERG homolog (173 aa).

Residues 1 to 84 constitute a DNA-binding region (ETS); the sequence is SGQIQLWQFL…HGKRYAYKFD (84 aa).

It belongs to the ETS family.

The protein localises to the nucleus. Its function is as follows. Acts as a transcriptional activator. The polypeptide is Transcriptional regulator ERG homolog (ERG) (Lytechinus variegatus (Green sea urchin)).